We begin with the raw amino-acid sequence, 318 residues long: Ferrochelatase (318 aa).

Histidine 194 and glutamate 275 together coordinate Fe cation.

Belongs to the ferrochelatase family.

The protein resides in the cytoplasm. It catalyses the reaction heme b + 2 H(+) = protoporphyrin IX + Fe(2+). It functions in the pathway porphyrin-containing compound metabolism; protoheme biosynthesis; protoheme from protoporphyrin-IX: step 1/1. Catalyzes the ferrous insertion into protoporphyrin IX. This chain is Ferrochelatase, found in Xanthomonas axonopodis pv. citri (strain 306).